Reading from the N-terminus, the 572-residue chain is MFS-type transporter pydD (572 aa).

The span at 1–15 shows a compositional bias: basic and acidic residues; it reads MLQEDKSSETMHDPS. The segment at 1–46 is disordered; sequence MLQEDKSSETMHDPSTRGVETRNVTAVDSPLETATTSESPETERTN. N-linked (GlcNAc...) asparagine glycosylation is present at Asn-23. A compositionally biased stretch (low complexity) spans 29-39; it reads SPLETATTSES. The next 8 helical transmembrane spans lie at 56-76, 88-108, 123-143, 156-176, 185-205, 212-232, 255-275, and 282-302; these read FWALLVSISLAGLLTALEGTI, LGGGHLYVWVVNGYLFAMTAM, WPMLGATALFVLGSGICGGAT, GIGASGTTVLTETIICDVVPL, IVMGMIFLGTALGPFFAGLIV, WTFYLALPVGGAALVALFSFL, ALFVAAISSVLIGLSWAGSVY, and VLVPLFVGIAGMGLFMVFEGS. Residue Asn-317 is glycosylated (N-linked (GlcNAc...) asparagine). The next 6 helical transmembrane spans lie at 321–341, 358–378, 386–406, 419–439, 451–471, and 529–549; these read VGVMIMTFFHGIITIWQLYFM, VQILATILAILPAAGIGGFLM, PIHYASWAVTLIGLGLFSLLD, IVYSMGAGMLVPTLLPALLAP, TWSFVRSFGMVWGTAIPAAVF, and WLVSLAFAGMGLLAATLAREV.

This sequence belongs to the major facilitator superfamily.

It localises to the membrane. In terms of biological role, MFS-type transporter; part of the gene cluster that mediates the biosynthesis of pyrrocidines, fungal natural products containing a macrocyclic para-cyclophane connected to a decahydrofluorene ring system that show potent antibiotic activities toward Gram-negative bacteria. This is MFS-type transporter pydD from Acremonium sp.